Reading from the N-terminus, the 335-residue chain is Ornithine carbamoyltransferase (335 aa).

Residues 57 to 60 (STRT), Arg-108, and 135 to 138 (HPTQ) each bind carbamoyl phosphate. L-ornithine contacts are provided by residues Asn-168, Asp-232, and 236–237 (SM). Residues 274–275 (CL) and Arg-319 each bind carbamoyl phosphate.

It belongs to the aspartate/ornithine carbamoyltransferase superfamily. OTCase family.

The protein localises to the cytoplasm. The enzyme catalyses carbamoyl phosphate + L-ornithine = L-citrulline + phosphate + H(+). It functions in the pathway amino-acid degradation; L-arginine degradation via ADI pathway; carbamoyl phosphate from L-arginine: step 2/2. Functionally, reversibly catalyzes the transfer of the carbamoyl group from carbamoyl phosphate (CP) to the N(epsilon) atom of ornithine (ORN) to produce L-citrulline. This is Ornithine carbamoyltransferase from Limosilactobacillus reuteri (strain DSM 20016) (Lactobacillus reuteri).